The primary structure comprises 325 residues: Tetraacyldisaccharide 4'-kinase (325 aa).

Ser53 to Thr60 lines the ATP pocket.

It belongs to the LpxK family.

The catalysed reaction is a lipid A disaccharide + ATP = a lipid IVA + ADP + H(+). Its pathway is glycolipid biosynthesis; lipid IV(A) biosynthesis; lipid IV(A) from (3R)-3-hydroxytetradecanoyl-[acyl-carrier-protein] and UDP-N-acetyl-alpha-D-glucosamine: step 6/6. Transfers the gamma-phosphate of ATP to the 4'-position of a tetraacyldisaccharide 1-phosphate intermediate (termed DS-1-P) to form tetraacyldisaccharide 1,4'-bis-phosphate (lipid IVA). The chain is Tetraacyldisaccharide 4'-kinase from Pasteurella multocida (strain Pm70).